Reading from the N-terminus, the 689-residue chain is Probable serine/threonine-protein kinase abkC (689 aa).

The interval 42 to 79 (NNSGNENYKNFNYNYKNKNNYNNNNNNNNSNSSSNNNG) is disordered. The region spanning 257–689 (WFDEEPMASG…NNKNNNEKNK (433 aa)) is the Protein kinase domain. Residues 263-271 (MASGSVAQV) and K285 contribute to the ATP site. The active-site Proton acceptor is D417. The interval 652 to 689 (KQLNNDNNNNNNNNNNNKNNNDNNNKNNNNKNNNEKNK) is disordered. Positions 655 to 683 (NNDNNNNNNNNNNNKNNNDNNNKNNNNKN) are enriched in low complexity.

This sequence belongs to the protein kinase superfamily. ADCK protein kinase family.

This Dictyostelium discoideum (Social amoeba) protein is Probable serine/threonine-protein kinase abkC (abkC).